The sequence spans 549 residues: Probable chaperonin-like protein PrmG (549 aa).

Belongs to the chaperonin (HSP60) family.

In terms of biological role, probably plays an essential role in the productive folding of PrmA, and thus in the formation of the active PrmABCD complex. The protein is Probable chaperonin-like protein PrmG (prmG) of Rhodococcus jostii (strain RHA1).